A 337-amino-acid chain; its full sequence is Mycothiol acetyltransferase (337 aa).

N-acetyltransferase domains follow at residues 11-151 (LDER…FELP) and 154-337 (VRLR…MYRK). Residue Glu-37 coordinates 1D-myo-inositol 2-(L-cysteinylamino)-2-deoxy-alpha-D-glucopyranoside. 81-83 (LVI) provides a ligand contact to acetyl-CoA. Glu-182 contributes to the 1D-myo-inositol 2-(L-cysteinylamino)-2-deoxy-alpha-D-glucopyranoside binding site. The disordered stretch occupies residues 210–246 (RPTGSGDGDVADGGSTDGGPADSGSADGGAGEGGTGD). Low complexity predominate over residues 221–234 (DGGSTDGGPADSGS). The span at 235-246 (ADGGAGEGGTGD) shows a compositional bias: gly residues. Positions 257 and 271 each coordinate 1D-myo-inositol 2-(L-cysteinylamino)-2-deoxy-alpha-D-glucopyranoside. Residues 275 to 277 (VGV) and 282 to 288 (QGGGLGR) contribute to the acetyl-CoA site. 1D-myo-inositol 2-(L-cysteinylamino)-2-deoxy-alpha-D-glucopyranoside is bound at residue Tyr-309. 314 to 319 (NTAAIR) provides a ligand contact to acetyl-CoA.

It belongs to the acetyltransferase family. MshD subfamily. In terms of assembly, monomer.

The enzyme catalyses 1D-myo-inositol 2-(L-cysteinylamino)-2-deoxy-alpha-D-glucopyranoside + acetyl-CoA = mycothiol + CoA + H(+). Its function is as follows. Catalyzes the transfer of acetyl from acetyl-CoA to desacetylmycothiol (Cys-GlcN-Ins) to form mycothiol. The sequence is that of Mycothiol acetyltransferase from Streptosporangium roseum (strain ATCC 12428 / DSM 43021 / JCM 3005 / KCTC 9067 / NCIMB 10171 / NRRL 2505 / NI 9100).